Here is a 102-residue protein sequence, read N- to C-terminus: MTIGLGHYLAVAAMLFTLGILGIFLNRKNIIVILMSVELILLAVNINLVAFSTFLGDIVGQVFALLVLTVAAAEAAIGLAVLVVYFRNRGSIAVEDVNLMKG.

3 consecutive transmembrane segments (helical) span residues 5-25 (LGHY…GIFL), 30-50 (IIVI…NLVA), and 62-82 (VFAL…LAVL).

This sequence belongs to the complex I subunit 4L family. As to quaternary structure, NDH-1 is composed of 14 different subunits. Subunits NuoA, H, J, K, L, M, N constitute the membrane sector of the complex.

The protein localises to the cell inner membrane. The catalysed reaction is a quinone + NADH + 5 H(+)(in) = a quinol + NAD(+) + 4 H(+)(out). Its function is as follows. NDH-1 shuttles electrons from NADH, via FMN and iron-sulfur (Fe-S) centers, to quinones in the respiratory chain. The immediate electron acceptor for the enzyme in this species is believed to be ubiquinone. Couples the redox reaction to proton translocation (for every two electrons transferred, four hydrogen ions are translocated across the cytoplasmic membrane), and thus conserves the redox energy in a proton gradient. This is NADH-quinone oxidoreductase subunit K from Bradyrhizobium sp. (strain BTAi1 / ATCC BAA-1182).